The chain runs to 923 residues: Probable dipeptidyl-aminopeptidase B (923 aa).

Positions Met-1 to Pro-16 are enriched in basic and acidic residues. Positions Met-1–Ser-21 are disordered. Topologically, residues Met-1–Ala-99 are cytoplasmic. The helical; Signal-anchor for type II membrane protein transmembrane segment at Leu-100 to Phe-120 threads the bilayer. Topologically, residues Arg-121 to His-923 are vacuolar. Asn-135, Asn-351, and Asn-574 each carry an N-linked (GlcNAc...) asparagine glycan. Ser-756 (charge relay system) is an active-site residue. A glycan (N-linked (GlcNAc...) asparagine) is linked at Asn-815. Active-site charge relay system residues include Asp-833 and His-866. Asn-902 carries N-linked (GlcNAc...) asparagine glycosylation.

The protein belongs to the peptidase S9B family.

Its subcellular location is the vacuole membrane. The catalysed reaction is Release of an N-terminal dipeptide, Xaa-Yaa-|-Zaa-, from a polypeptide, preferentially when Yaa is Pro, provided Zaa is neither Pro nor hydroxyproline.. Its function is as follows. Type IV dipeptidyl-peptidase which removes N-terminal dipeptides sequentially from polypeptides having unsubstituted N-termini provided that the penultimate residue is proline. The chain is Probable dipeptidyl-aminopeptidase B (DAPB) from Ajellomyces capsulatus (strain G186AR / H82 / ATCC MYA-2454 / RMSCC 2432) (Darling's disease fungus).